We begin with the raw amino-acid sequence, 285 residues long: Prephenate dehydratase (285 aa).

Residues lysine 2 to proline 183 form the Prephenate dehydratase domain. An ACT domain is found at methionine 204–glutamine 281.

It carries out the reaction prephenate + H(+) = 3-phenylpyruvate + CO2 + H2O. It functions in the pathway amino-acid biosynthesis; L-phenylalanine biosynthesis; phenylpyruvate from prephenate: step 1/1. This Bacillus subtilis (strain 168) protein is Prephenate dehydratase (pheA).